Reading from the N-terminus, the 330-residue chain is MRSSTHIFVSFVVYCGVFVTSAIALSNHTNAYQCDRWSNVLNELQANLFHEGQCRSAALRASGTFGGGGADGSIIQFAHTELAYPANEGLEEMVYTLKHFADGHEVSYGDMIQFAGAVALSNCPGSPRLRFYAGRPEAIAPSPPNLLPLPTDPVEKILSRMADAGFNAGDTVALLAAHSIAVQNTIDPSIPDSPLDSTPRIFDTQFYLETLLRGTRYPGKGRGPAQSKSPIEHEFRLASDAAIARHTSTACEWQSFIDNQEGLRSAFRNAMVKLANQGHDNLVDCSFVIPVPPPWNLPVEYPSGKSRSDVEQSCSDVPFPTISLNSDVHD.

An N-terminal signal peptide occupies residues 1 to 24 (MRSSTHIFVSFVVYCGVFVTSAIA). N-linked (GlcNAc...) asparagine glycosylation is present at Asn27. 3 cysteine pairs are disulfide-bonded: Cys34–Cys285, Cys54–Cys123, and Cys251–Cys314. Ca(2+)-binding residues include Gly69, Asp71, and Ser73. His178 provides a ligand contact to heme b. 4 residues coordinate Ca(2+): Ser179, Asp196, Thr198, and Asp203.

Belongs to the peroxidase family. Ligninase subfamily. Ca(2+) is required as a cofactor. Requires heme b as cofactor.

It is found in the secreted. It carries out the reaction 2 a phenolic donor + H2O2 = 2 a phenolic radical donor + 2 H2O. Functionally, can oxidize the lignin redox mediator veratryl alcohol to veratryl aldehyde. May be involved in oxidation of lignocellulose substrates. This chain is Low-redox potential peroxidase (LnP), found in Taiwanofungus camphoratus (Poroid brown-rot fungus).